Here is a 978-residue protein sequence, read N- to C-terminus: Copper-transporting ATPase HMA4 (978 aa).

Positions 1-11 are enriched in basic and acidic residues; it reads MEQNGENHLKD. The tract at residues 1–35 is disordered; sequence MEQNGENHLKDPLLQADGGGSGASPAGASPRKERK. HMA domains follow at residues 37-103, 111-177, and 186-252; these read RKVM…FEVD, AVCR…FGAD, and NKVH…QPPK. Cu(+)-binding residues include cysteine 48, cysteine 51, cysteine 122, and cysteine 125. 8 helical membrane passes run 280–300, 315–335, 352–372, 385–405, 545–565, 584–604, 907–927, and 935–955; these read FLWS…LPMI, MTIG…IIGW, MDVL…YIVL, FFET…LEVV, FFVP…FVAG, LALQ…LGLA, VWAL…LFPF, and WLAG…SLLL.

The protein belongs to the cation transport ATPase (P-type) (TC 3.A.3) family. Type IB subfamily. In terms of tissue distribution, highly expressed in roots. Expressed in vascular tissues of the stele, mainly in pericycle cells.

The protein resides in the vacuole membrane. The enzyme catalyses Cu(+)(in) + ATP + H2O = Cu(+)(out) + ADP + phosphate + H(+). Functionally, copper (Cu) transporter that mediates Cu transport in root vacuoles. Involved in Cu detoxification by sequestrating Cu into root vacuoles and limiting translocation of Cu from the roots to the shoots, and accumulation in grains. In Oryza sativa subsp. japonica (Rice), this protein is Copper-transporting ATPase HMA4.